The primary structure comprises 111 residues: Flagellar hook-basal body complex protein FliE (111 aa).

The protein belongs to the FliE family.

It localises to the bacterial flagellum basal body. The chain is Flagellar hook-basal body complex protein FliE from Sinorhizobium fredii (strain NBRC 101917 / NGR234).